Here is an 841-residue protein sequence, read N- to C-terminus: Nuclear RNA export factor 2 (841 aa).

The segment at 1-285 (MPNQMRVLDF…NFELVDGKPF (285 aa)) is RNA-binding unit probably involved in Piwi-dependent recruitment and single-stranded RNA-PPNP complex formation. LRR repeat units follow at residues 200–221 (RLNGFILSNNRIRDIRPLTLLA), 224–245 (DYALLDLRGNKIKSAERLCRAL), and 249–270 (RARELLLENNPIVKISNFPANI). The necessary for silencing function stretch occupies residues 286–553 (NMLHKIFSPL…EYVRAVKEVF (268 aa)). One can recognise an RRM domain in the interval 325–408 (WHAFMIPDPS…IFRYYLRMNV (84 aa)). 3 LRR repeats span residues 475 to 496 (TCSEIRLCHNKVLVLDGAHVLG), 500 to 521 (CLRAVDLSHNWVQDLSSIHSLG), and 524 to 545 (PLKSLVLHGNKLCRNYRLPSEY). An NTF2 domain is found at 585–758 (LVGAFLENYL…LKIANERLHI (174 aa)). The TAP-C domain occupies 788–841 (DVKDHKLLLFQEVTGLISTWVTSIVEEADWDFERALKLFIQKNADHEIPDLAFA).

Belongs to the NXF family. As to quaternary structure, in the ovaries, part of a complex composed of at least Panx, nxf2, piwi and Nxt1. The complex is knowns as Panx-induced cotranscriptional silencing (PICTS) complex, Panx-nxf2-dependent TAP/p15 silencing (Pandas complex), SFiNX (silencing factor interacting nuclear export variant) or piwi-Panx-nxf2-p15 (PPNP) complex. Interacts (via TAP-C domain) with Panx (via NIR region); the interaction is direct. Interacts (via NTF2 domain) with Nxt1; the interaction is direct and prevents Nxt1 binding to nucleoporins. Interacts with sbr/Nxf1. In terms of tissue distribution, expressed in female gonads (at protein level). Expressed ubiquitously.

It is found in the cytoplasm. Its subcellular location is the nucleus. The protein localises to the nucleoplasm. May be involved in the export of mRNA from the nucleus to the cytoplasm. In the ovaries, forms a complex with nxf2, piwi and Nxt1 which acts as effectors of cotranscriptional transposon silencing. On recruitment to a target transcript, interacts with single stranded RNA, thereby anchoring the complex via the nascent target transcript to chromatin and allowing Panx to recruit silencing effectors to establishing repressive heterochromatin at transposon loci. Does not affect piRNA biogenesis. The interaction with Panx stabilizes the nuclear protein complex. Does not bind nucleoporins, but regulates sbr/Nxf1 binding to nucleoporins and, indirectly, transposon exports. In Drosophila melanogaster (Fruit fly), this protein is Nuclear RNA export factor 2 (nxf2).